The chain runs to 556 residues: Phosphoglucomutase (556 aa).

Residues arginine 22 and serine 114 each contribute to the alpha-D-glucose 1,6-bisphosphate site. Serine 114 serves as the catalytic Phosphoserine intermediate. Mg(2+) is bound by residues serine 114, aspartate 279, aspartate 281, and aspartate 283. Serine 114 carries the phosphoserine modification. The alpha-D-glucose 1,6-bisphosphate site is built by aspartate 283, arginine 284, threonine 347, glutamate 366, serine 368, and lysine 379.

This sequence belongs to the phosphohexose mutase family. In terms of assembly, monomer. Mg(2+) is required as a cofactor.

It is found in the cytoplasm. The enzyme catalyses alpha-D-glucose 1-phosphate = alpha-D-glucose 6-phosphate. It catalyses the reaction O-phospho-L-seryl-[protein] + alpha-D-glucose 1-phosphate = alpha-D-glucose 1,6-bisphosphate + L-seryl-[protein]. The catalysed reaction is alpha-D-glucose 1,6-bisphosphate + L-seryl-[protein] = O-phospho-L-seryl-[protein] + alpha-D-glucose 6-phosphate. Functionally, catalyzes the reversible isomerization of alpha-D-glucose 1-phosphate to alpha-D-glucose 6-phosphate. The mechanism proceeds via the intermediate compound alpha-D-glucose 1,6-bisphosphate. Key enzyme in hexose metabolism. The reverse reaction is an essential step for biosynthesis because glucose 1-phosphate is the starting point for the synthesis of UDP-glucose, which acts as a precursor for the synthesis of oligosaccharides and trehalose. The protein is Phosphoglucomutase (pgmB) of Emericella nidulans (strain FGSC A4 / ATCC 38163 / CBS 112.46 / NRRL 194 / M139) (Aspergillus nidulans).